The chain runs to 331 residues: Adenosine deaminase (331 aa).

Histidine 12 and histidine 14 together coordinate Zn(2+). Substrate contacts are provided by histidine 14, aspartate 16, and glycine 170. A Zn(2+)-binding site is contributed by histidine 197. Residue glutamate 200 is the Proton donor of the active site. A Zn(2+)-binding site is contributed by aspartate 278. Substrate is bound at residue aspartate 279.

It belongs to the metallo-dependent hydrolases superfamily. Adenosine and AMP deaminases family. Adenosine deaminase subfamily. The cofactor is Zn(2+).

It catalyses the reaction adenosine + H2O + H(+) = inosine + NH4(+). It carries out the reaction 2'-deoxyadenosine + H2O + H(+) = 2'-deoxyinosine + NH4(+). In terms of biological role, catalyzes the hydrolytic deamination of adenosine and 2-deoxyadenosine. The sequence is that of Adenosine deaminase from Shewanella sp. (strain MR-7).